The primary structure comprises 434 residues: Enolase (434 aa).

Positions 29–56 (SGHTGRAAVPSGASTGSREALEMRDGDK) are disordered. The segment covering 47–56 (EALEMRDGDK) has biased composition (basic and acidic residues). Gln-163 lines the (2R)-2-phosphoglycerate pocket. Glu-205 functions as the Proton donor in the catalytic mechanism. Positions 242, 285, and 312 each coordinate Mg(2+). (2R)-2-phosphoglycerate contacts are provided by Lys-337, Arg-366, Ser-367, and Lys-388. Catalysis depends on Lys-337, which acts as the Proton acceptor.

Belongs to the enolase family. As to quaternary structure, homooctamer. The cofactor is Mg(2+).

The protein localises to the cytoplasm. It localises to the secreted. It is found in the cell surface. The catalysed reaction is (2R)-2-phosphoglycerate = phosphoenolpyruvate + H2O. Its pathway is carbohydrate degradation; glycolysis; pyruvate from D-glyceraldehyde 3-phosphate: step 4/5. Catalyzes the reversible conversion of 2-phosphoglycerate (2-PG) into phosphoenolpyruvate (PEP). It is essential for the degradation of carbohydrates via glycolysis. In Nitratidesulfovibrio vulgaris (strain DSM 19637 / Miyazaki F) (Desulfovibrio vulgaris), this protein is Enolase.